The primary structure comprises 123 residues: MGTATGAGYFQRGSLFWFTVITVSFGYYTWAVFWPQSIPYQSLGPLGPFTKYLVDHYHTFLRNGYWLAWLIHVGESLYALVLCKRKGITDVQAQLLWFLQTFLFGVASLSILIAYRSKRQKHN.

3 consecutive transmembrane segments (helical) span residues 15-35, 63-83, and 95-115; these read LFWF…VFWP, NGYW…LVLC, and LLWF…LIAY.

The protein resides in the membrane. The protein is Transmembrane protein 254 of Mus musculus (Mouse).